The sequence spans 780 residues: Lethal(3)malignant brain tumor-like protein 3 (780 aa).

The segment at methionine 1–tryptophan 64 is interaction with RBPJ. Required for transcription repressor activity on Notch target genes. The tract at residues aspartate 149 to leucine 220 is disordered. Acidic residues-rich tracts occupy residues aspartate 157–aspartate 166 and glutamate 185–methionine 194. 3 MBT repeats span residues tryptophan 232–proline 332, phenylalanine 340–proline 439, and phenylalanine 448–proline 543. The segment at leucine 549 to aspartate 593 adopts a CCHHC-type; degenerate zinc-finger fold. Residues proline 597–glutamine 665 form a disordered region. An interaction with DCAF5 region spans residues leucine 600–threonine 710. The residue at position 608 (serine 608) is a Phosphoserine. Lysine 637 participates in a covalent cross-link: Glycyl lysine isopeptide (Lys-Gly) (interchain with G-Cter in SUMO2). Residues arginine 643–proline 661 show a composition bias toward basic and acidic residues. Lysine 704 is covalently cross-linked (Glycyl lysine isopeptide (Lys-Gly) (interchain with G-Cter in SUMO2)). The region spanning tryptophan 708–alanine 772 is the SAM domain.

As to quaternary structure, interacts with RNF2. Interacts (via SAM domain) with SAMD1 (via SAM domain); the interaction mediates L3MBTL3 binding to chromatin. Interacts with RBPJ; the interaction is required for L3MBTL3 localization to chromatin and is impaired by Notch-derived peptides containing the intracellular domain (NICD). Interacts (via SAM domain) with KDM1A. Interacts with DCAF5. Interacts with DNMT1. Interacts with E2F1. Interacts with SOX2. Interacts with SFMBT1.

It is found in the nucleus. Is a negative regulator of Notch target genes expression, required for RBPJ-mediated transcriptional repression. It recruits KDM1A to Notch-responsive elements and promotes KDM1A-mediated H3K4me demethylation. Involved in the regulation of ubiquitin-dependent degradation of a set of methylated non-histone proteins, including SOX2, DNMT1 and E2F1. It acts as an adapter recruiting the CRL4-DCAF5 E3 ubiquitin ligase complex to methylated target proteins. Required for normal maturation of myeloid progenitor cells. This chain is Lethal(3)malignant brain tumor-like protein 3, found in Homo sapiens (Human).